The primary structure comprises 1357 residues: DNA-directed RNA polymerase subunit beta (1357 aa).

The protein belongs to the RNA polymerase beta chain family. As to quaternary structure, the RNAP catalytic core consists of 2 alpha, 1 beta, 1 beta' and 1 omega subunit. When a sigma factor is associated with the core the holoenzyme is formed, which can initiate transcription.

The enzyme catalyses RNA(n) + a ribonucleoside 5'-triphosphate = RNA(n+1) + diphosphate. DNA-dependent RNA polymerase catalyzes the transcription of DNA into RNA using the four ribonucleoside triphosphates as substrates. In Pseudomonas putida (Arthrobacter siderocapsulatus), this protein is DNA-directed RNA polymerase subunit beta.